Consider the following 447-residue polypeptide: N-succinylarginine dihydrolase (447 aa).

Residues 19–28 (AGLSFGNEAS), N110, and 137–138 (HR) each bind substrate. The active site involves E174. R212 is a binding site for substrate. H248 is a catalytic residue. Residues D250 and N359 each contribute to the substrate site. C365 functions as the Nucleophile in the catalytic mechanism.

This sequence belongs to the succinylarginine dihydrolase family. Homodimer.

The enzyme catalyses N(2)-succinyl-L-arginine + 2 H2O + 2 H(+) = N(2)-succinyl-L-ornithine + 2 NH4(+) + CO2. It participates in amino-acid degradation; L-arginine degradation via AST pathway; L-glutamate and succinate from L-arginine: step 2/5. In terms of biological role, catalyzes the hydrolysis of N(2)-succinylarginine into N(2)-succinylornithine, ammonia and CO(2). The protein is N-succinylarginine dihydrolase of Salmonella heidelberg (strain SL476).